A 207-amino-acid chain; its full sequence is ATP synthase subunit b 2 (207 aa).

A helical membrane pass occupies residues 53–72 (TYASQLLWLVITFSVFYLLM).

It belongs to the ATPase B chain family. As to quaternary structure, F-type ATPases have 2 components, F(1) - the catalytic core - and F(0) - the membrane proton channel. F(1) has five subunits: alpha(3), beta(3), gamma(1), delta(1), epsilon(1). F(0) has three main subunits: a(1), b(2) and c(10-14). The alpha and beta chains form an alternating ring which encloses part of the gamma chain. F(1) is attached to F(0) by a central stalk formed by the gamma and epsilon chains, while a peripheral stalk is formed by the delta and b chains.

Its subcellular location is the cell inner membrane. Functionally, f(1)F(0) ATP synthase produces ATP from ADP in the presence of a proton or sodium gradient. F-type ATPases consist of two structural domains, F(1) containing the extramembraneous catalytic core and F(0) containing the membrane proton channel, linked together by a central stalk and a peripheral stalk. During catalysis, ATP synthesis in the catalytic domain of F(1) is coupled via a rotary mechanism of the central stalk subunits to proton translocation. Component of the F(0) channel, it forms part of the peripheral stalk, linking F(1) to F(0). The b'-subunit is a diverged and duplicated form of b found in plants and photosynthetic bacteria. The chain is ATP synthase subunit b 2 (atpF2) from Rhizobium etli (strain CIAT 652).